The following is a 253-amino-acid chain: Imidazole glycerol phosphate synthase subunit HisF (253 aa).

Residues aspartate 11 and aspartate 130 contribute to the active site.

It belongs to the HisA/HisF family. As to quaternary structure, heterodimer of HisH and HisF.

It is found in the cytoplasm. The catalysed reaction is 5-[(5-phospho-1-deoxy-D-ribulos-1-ylimino)methylamino]-1-(5-phospho-beta-D-ribosyl)imidazole-4-carboxamide + L-glutamine = D-erythro-1-(imidazol-4-yl)glycerol 3-phosphate + 5-amino-1-(5-phospho-beta-D-ribosyl)imidazole-4-carboxamide + L-glutamate + H(+). Its pathway is amino-acid biosynthesis; L-histidine biosynthesis; L-histidine from 5-phospho-alpha-D-ribose 1-diphosphate: step 5/9. Its function is as follows. IGPS catalyzes the conversion of PRFAR and glutamine to IGP, AICAR and glutamate. The HisF subunit catalyzes the cyclization activity that produces IGP and AICAR from PRFAR using the ammonia provided by the HisH subunit. In Paracoccus denitrificans (strain Pd 1222), this protein is Imidazole glycerol phosphate synthase subunit HisF.